Reading from the N-terminus, the 260-residue chain is 3-alpha-(or 20-beta)-hydroxysteroid dehydrogenase (260 aa).

11 residues coordinate NAD(+): arginine 17, methionine 19, aspartate 38, aspartate 61, valine 62, asparagine 88, tyrosine 153, lysine 157, valine 186, threonine 188, and threonine 191. The Proton acceptor role is filled by tyrosine 153.

It belongs to the short-chain dehydrogenases/reductases (SDR) family. Homotetramer.

The catalysed reaction is androstan-3alpha,17beta-diol + NAD(+) = 17beta-hydroxyandrostanone + NADH + H(+). It participates in lipid metabolism; steroid degradation. In terms of biological role, probably involved in steroid metabolism. This chain is 3-alpha-(or 20-beta)-hydroxysteroid dehydrogenase (fabG3), found in Mycobacterium tuberculosis (strain CDC 1551 / Oshkosh).